Reading from the N-terminus, the 372-residue chain is NADH-quinone oxidoreductase subunit D (372 aa).

It belongs to the complex I 49 kDa subunit family. In terms of assembly, NDH-1 is composed of 14 different subunits. Subunits NuoB, C, D, E, F, and G constitute the peripheral sector of the complex.

Its subcellular location is the cell inner membrane. The catalysed reaction is a quinone + NADH + 5 H(+)(in) = a quinol + NAD(+) + 4 H(+)(out). In terms of biological role, NDH-1 shuttles electrons from NADH, via FMN and iron-sulfur (Fe-S) centers, to quinones in the respiratory chain. The immediate electron acceptor for the enzyme in this species is believed to be ubiquinone. Couples the redox reaction to proton translocation (for every two electrons transferred, four hydrogen ions are translocated across the cytoplasmic membrane), and thus conserves the redox energy in a proton gradient. The chain is NADH-quinone oxidoreductase subunit D from Desulfotalea psychrophila (strain LSv54 / DSM 12343).